The following is a 192-amino-acid chain: MNDVTEPVSATLAERAKRTLGKRNLVFIGLMGAGKSAIGRLTAQALGVPFVDSDHEIERVSRMTVSDLFATYGEEEFRALEARVLKRLLRSGPRVVSTGGGAYINERSRRHIKKGGLTIWLNAELDVLWERVNKRDTRPLLKTENPKQTLENLMRARYPIYAEADLTVLSRDVKKEAMVEEVLAAVADHQKA.

Position 32 to 37 (32 to 37) interacts with ATP; that stretch reads GAGKSA. Ser-36 is a Mg(2+) binding site. Positions 54, 78, and 100 each coordinate substrate. An ATP-binding site is contributed by Arg-138. Arg-157 is a binding site for substrate.

The protein belongs to the shikimate kinase family. As to quaternary structure, monomer. Mg(2+) serves as cofactor.

Its subcellular location is the cytoplasm. It carries out the reaction shikimate + ATP = 3-phosphoshikimate + ADP + H(+). Its pathway is metabolic intermediate biosynthesis; chorismate biosynthesis; chorismate from D-erythrose 4-phosphate and phosphoenolpyruvate: step 5/7. Functionally, catalyzes the specific phosphorylation of the 3-hydroxyl group of shikimic acid using ATP as a cosubstrate. The chain is Shikimate kinase from Rhizobium meliloti (strain 1021) (Ensifer meliloti).